A 219-amino-acid polypeptide reads, in one-letter code: Octanoyltransferase (219 aa).

One can recognise a BPL/LPL catalytic domain in the interval 32 to 207 (ASSPDQLWIV…TFSHNLGYQN (176 aa)). Residues 71-78 (RGGQVTYH), 138-140 (SLG), and 151-153 (GLA) each bind substrate. The active-site Acyl-thioester intermediate is cysteine 169.

The protein belongs to the LipB family.

It localises to the cytoplasm. The catalysed reaction is octanoyl-[ACP] + L-lysyl-[protein] = N(6)-octanoyl-L-lysyl-[protein] + holo-[ACP] + H(+). The protein operates within protein modification; protein lipoylation via endogenous pathway; protein N(6)-(lipoyl)lysine from octanoyl-[acyl-carrier-protein]: step 1/2. Functionally, catalyzes the transfer of endogenously produced octanoic acid from octanoyl-acyl-carrier-protein onto the lipoyl domains of lipoate-dependent enzymes. Lipoyl-ACP can also act as a substrate although octanoyl-ACP is likely to be the physiological substrate. This Shewanella sediminis (strain HAW-EB3) protein is Octanoyltransferase.